Consider the following 206-residue polypeptide: MKGGKRVQTARPNRINGEIRAQEVRLTGLEGEQLGIVSLREALEKAEEAGVDLVEISPNAEPMSLREALEKAEEAGVDLVEISPNAEPPVCRIMDYGKFLYEKSKSSKEQKKKQKVIQVKEIKFRPSTDEGDYQVKLRSLIRFLEEGDKAKITLRFRGREMAHQQIGMEVLNRVKDDLQELAVVESFPTKIEGRQMIMVLAPKKKQ.

Belongs to the IF-3 family. In terms of assembly, monomer.

It localises to the cytoplasm. Functionally, IF-3 binds to the 30S ribosomal subunit and shifts the equilibrium between 70S ribosomes and their 50S and 30S subunits in favor of the free subunits, thus enhancing the availability of 30S subunits on which protein synthesis initiation begins. The chain is Translation initiation factor IF-3 from Shigella flexneri.